A 131-amino-acid polypeptide reads, in one-letter code: Small ribosomal subunit protein bS6 (131 aa).

Residues 96–131 are disordered; it reads VTEASPMVKAKDERRERRDDFANETADDAEAGDSEE. The segment covering 104–116 has biased composition (basic and acidic residues); that stretch reads KAKDERRERRDDF. A compositionally biased stretch (acidic residues) spans 120–131; sequence TADDAEAGDSEE.

The protein belongs to the bacterial ribosomal protein bS6 family.

Binds together with bS18 to 16S ribosomal RNA. This chain is Small ribosomal subunit protein bS6, found in Salmonella arizonae (strain ATCC BAA-731 / CDC346-86 / RSK2980).